The sequence spans 321 residues: Homoserine O-acetyltransferase (321 aa).

The active-site Acyl-thioester intermediate is Cys-142. The substrate site is built by Lys-163 and Ser-192. The active-site Proton acceptor is the His-235. The active site involves Glu-237. Substrate is bound at residue Arg-249.

This sequence belongs to the MetA family.

It is found in the cytoplasm. It carries out the reaction L-homoserine + acetyl-CoA = O-acetyl-L-homoserine + CoA. It functions in the pathway amino-acid biosynthesis; L-methionine biosynthesis via de novo pathway; O-acetyl-L-homoserine from L-homoserine: step 1/1. In terms of biological role, transfers an acetyl group from acetyl-CoA to L-homoserine, forming acetyl-L-homoserine. This Lactococcus lactis subsp. lactis (strain IL1403) (Streptococcus lactis) protein is Homoserine O-acetyltransferase.